A 327-amino-acid polypeptide reads, in one-letter code: GMP reductase (327 aa).

Cysteine 176 serves as the catalytic Thioimidate intermediate. An NADP(+)-binding site is contributed by 205 to 228 (IIADGGIRTHGDIAKSIRFGASMV).

Belongs to the IMPDH/GMPR family. GuaC type 2 subfamily.

It carries out the reaction IMP + NH4(+) + NADP(+) = GMP + NADPH + 2 H(+). Its function is as follows. Catalyzes the irreversible NADPH-dependent deamination of GMP to IMP. It functions in the conversion of nucleobase, nucleoside and nucleotide derivatives of G to A nucleotides, and in maintaining the intracellular balance of A and G nucleotides. The sequence is that of GMP reductase from Streptococcus pyogenes serotype M28 (strain MGAS6180).